The sequence spans 317 residues: Melanocyte-stimulating hormone receptor (317 aa).

Topologically, residues 1 to 37 are extracellular; that stretch reads MPVQGSQRRLLGSLNSTPTATPHLGLAANQTGAWCLE. Asn29 carries an N-linked (GlcNAc...) asparagine glycan. A helical membrane pass occupies residues 38–63; that stretch reads VSIPDGLFLSLGLVSLVENVLVVTAI. The Cytoplasmic segment spans residues 64–72; the sequence is AKNRNLHSP. The chain crosses the membrane as a helical span at residues 73-93; it reads MYCFICCLALSDLLVSGSNML. The Extracellular segment spans residues 94–118; sequence ETAVTLLLEAGALAARAAVVQQLDN. Residues 119-140 traverse the membrane as a helical segment; the sequence is VIDVITCSSMLSSLCFLGAIAV. Topologically, residues 141–163 are cytoplasmic; the sequence is DRYISIFYALRYHSIVTLPRARR. Residues 164–183 form a helical membrane-spanning segment; the sequence is AVAAIWVASVLFSMLFIAYY. At 184 to 191 the chain is on the extracellular side; the sequence is DHAAVLLC. Residues 192-211 traverse the membrane as a helical segment; sequence LVVFFLAMLVLMAVLYVHML. Topologically, residues 212–240 are cytoplasmic; the sequence is ARACQHAQGIARLHKRQRPAHQGFGLKGA. Residues 241-266 form a helical membrane-spanning segment; the sequence is ATLTILLGIFFLCWGPFFLHLTLIVL. Residues 267–279 are Extracellular-facing; sequence CPQHPTCSCIFKN. A helical membrane pass occupies residues 280-300; it reads FNLFLALIICNAIIDPLIYAF. At 301–317 the chain is on the cytoplasmic side; it reads RSQELRRTLKEVLLCSW. A lipid anchor (S-palmitoyl cysteine) is attached at Cys315.

The protein belongs to the G-protein coupled receptor 1 family. In terms of assembly, interacts with MGRN1, but does not undergo MGRN1-mediated ubiquitination; this interaction competes with GNAS-binding and thus inhibits agonist-induced cAMP production. Interacts with OPN3; the interaction results in a decrease in MC1R-mediated cAMP signaling and ultimately a decrease in melanin production in melanocytes.

The protein localises to the cell membrane. Receptor for MSH (alpha, beta and gamma) and ACTH. The activity of this receptor is mediated by G proteins which activate adenylate cyclase. Mediates melanogenesis, the production of eumelanin (black/brown) and phaeomelanin (red/yellow), via regulation of cAMP signaling in melanocytes. The protein is Melanocyte-stimulating hormone receptor (MC1R) of Allenopithecus nigroviridis (Allen's swamp monkey).